We begin with the raw amino-acid sequence, 272 residues long: Tryptophan synthase alpha chain (272 aa).

Residues glutamate 49 and aspartate 60 each act as proton acceptor in the active site.

Belongs to the TrpA family. In terms of assembly, tetramer of two alpha and two beta chains.

The catalysed reaction is (1S,2R)-1-C-(indol-3-yl)glycerol 3-phosphate + L-serine = D-glyceraldehyde 3-phosphate + L-tryptophan + H2O. The protein operates within amino-acid biosynthesis; L-tryptophan biosynthesis; L-tryptophan from chorismate: step 5/5. The alpha subunit is responsible for the aldol cleavage of indoleglycerol phosphate to indole and glyceraldehyde 3-phosphate. This Psychrobacter cryohalolentis (strain ATCC BAA-1226 / DSM 17306 / VKM B-2378 / K5) protein is Tryptophan synthase alpha chain.